A 437-amino-acid polypeptide reads, in one-letter code: Carboxypeptidase A6 (437 aa).

A signal peptide spans 1 to 30; it reads MKCLGKRRGQAAAFLPLCWLFLKILQPGHS. Positions 31–129 are cleaved as a propeptide — activation peptide; that stretch reads HLYNNRYAGD…SSLHTQRNRR (99 aa). 2 N-linked (GlcNAc...) asparagine glycosylation sites follow: Asn-89 and Asn-153. Positions 138–432 constitute a Peptidase M14 domain; that stretch reads VYHSLEEIQN…LAVKNITMHL (295 aa). Zn(2+) contacts are provided by His-196 and Glu-199. Substrate-binding positions include 196–199, Arg-254, and 271–272; these read HARE and NR. A disulfide bridge links Cys-265 with Cys-288. His-324 contributes to the Zn(2+) binding site. Residues 325–326 and Tyr-376 contribute to the substrate site; that span reads AY. Residue Glu-398 is the Proton donor/acceptor of the active site. Asn-427 carries N-linked (GlcNAc...) asparagine glycosylation.

It belongs to the peptidase M14 family. Zn(2+) is required as a cofactor. As to expression, expressed in the hippocampus, nucleus raphe, and cortex.

It localises to the secreted. The protein resides in the extracellular space. Its subcellular location is the extracellular matrix. Its function is as follows. May be involved in the proteolytic inactivation of enkephalins and neurotensin in some brain areas. May convert inactive angiotensin I into the biologically active angiotensin II. Releases a C-terminal amino acid, with preference for large hydrophobic C-terminal amino acids and shows only very weak activity toward small amino acids and histidine. The protein is Carboxypeptidase A6 (CPA6) of Homo sapiens (Human).